The sequence spans 72 residues: METQKLISMVKEALEKYQYPLTAKNIKVVIQKEHNVILPTGSINSILYSNSELFEKIDKTNTIYPPLWIRKN.

The protein belongs to the asfivirus I73R family.

The protein resides in the virion. This is an uncharacterized protein from African swine fever virus (isolate Warthog/Namibia/Wart80/1980) (ASFV).